A 117-amino-acid polypeptide reads, in one-letter code: DNA-directed RNA polymerase II subunit RPB11 (117 aa).

Methionine 1 bears the N-acetylmethionine mark.

This sequence belongs to the archaeal Rpo11/eukaryotic RPB11/RPC19 RNA polymerase subunit family. Component of the RNA polymerase II (Pol II) core complex consisting of 12 subunits: a ten-subunit catalytic core composed of POLR2A/RPB1, POLR2B/RPB2, POLR2C/RPB3, POLR2I/RPB9, POLR2J/RPB11, POLR2E/RPABC1, POLR2F/RPABC2, POLR2H/RPABC3, POLR2K/RPABC4 and POLR2L/RPABC5 and a mobile stalk composed of two subunits POLR2D/RPB4 and POLR2G/RPB7, protruding from the core and functioning primarily in transcription initiation. Part of Pol II(G) complex, in which Pol II core associates with an additional subunit POLR2M; unlike conventional Pol II, Pol II(G) functions as a transcriptional repressor. Part of TBP-based Pol II pre-initiation complex (PIC), in which Pol II core assembles with general transcription factors and other specific initiation factors including GTF2E1, GTF2E2, GTF2F1, GTF2F2, TCEA1, ERCC2, ERCC3, GTF2H2, GTF2H3, GTF2H4, GTF2H5, GTF2A1, GTF2A2, GTF2B and TBP; this large multi-subunit PIC complex mediates DNA unwinding and targets Pol II core to the transcription start site where the first phosphodiester bond forms. Interacts with AATF. Interacts with PTPN6; this interaction promotes the recruitment of RNA pol II to the PCK1 promoter.

Its subcellular location is the nucleus. In terms of biological role, core component of RNA polymerase II (Pol II), a DNA-dependent RNA polymerase which synthesizes mRNA precursors and many functional non-coding RNAs using the four ribonucleoside triphosphates as substrates. In Mus musculus (Mouse), this protein is DNA-directed RNA polymerase II subunit RPB11 (Polr2j).